Consider the following 350-residue polypeptide: Chorismate synthase (350 aa).

Residues Arg-39 and Arg-45 each contribute to the NADP(+) site. The segment at 85–104 (KDKKVPPVTRPRPGHADLPG) is disordered. FMN contacts are provided by residues 119–121 (RAS), 213–214 (QG), Gly-258, 273–277 (KPIPT), and Arg-299.

Belongs to the chorismate synthase family. As to quaternary structure, homotetramer. The cofactor is FMNH2.

It carries out the reaction 5-O-(1-carboxyvinyl)-3-phosphoshikimate = chorismate + phosphate. It functions in the pathway metabolic intermediate biosynthesis; chorismate biosynthesis; chorismate from D-erythrose 4-phosphate and phosphoenolpyruvate: step 7/7. Its function is as follows. Catalyzes the anti-1,4-elimination of the C-3 phosphate and the C-6 proR hydrogen from 5-enolpyruvylshikimate-3-phosphate (EPSP) to yield chorismate, which is the branch point compound that serves as the starting substrate for the three terminal pathways of aromatic amino acid biosynthesis. This reaction introduces a second double bond into the aromatic ring system. This chain is Chorismate synthase, found in Caldanaerobacter subterraneus subsp. tengcongensis (strain DSM 15242 / JCM 11007 / NBRC 100824 / MB4) (Thermoanaerobacter tengcongensis).